The sequence spans 443 residues: ATP-dependent protease ATPase subunit HslU (443 aa).

ATP-binding positions include Ile18 and 60 to 65; that span reads GVGKTE. The segment at 142–162 is disordered; it reads LGFEASPSEESNATRQKFRKK. The ATP site is built by Asp256, Glu321, and Arg393.

It belongs to the ClpX chaperone family. HslU subfamily. As to quaternary structure, a double ring-shaped homohexamer of HslV is capped on each side by a ring-shaped HslU homohexamer. The assembly of the HslU/HslV complex is dependent on binding of ATP.

The protein resides in the cytoplasm. Its function is as follows. ATPase subunit of a proteasome-like degradation complex; this subunit has chaperone activity. The binding of ATP and its subsequent hydrolysis by HslU are essential for unfolding of protein substrates subsequently hydrolyzed by HslV. HslU recognizes the N-terminal part of its protein substrates and unfolds these before they are guided to HslV for hydrolysis. This is ATP-dependent protease ATPase subunit HslU from Nitrosomonas europaea (strain ATCC 19718 / CIP 103999 / KCTC 2705 / NBRC 14298).